Consider the following 119-residue polypeptide: Large ribosomal subunit protein bL19 (119 aa).

Belongs to the bacterial ribosomal protein bL19 family.

This protein is located at the 30S-50S ribosomal subunit interface and may play a role in the structure and function of the aminoacyl-tRNA binding site. The sequence is that of Large ribosomal subunit protein bL19 from Leuconostoc citreum (strain KM20).